We begin with the raw amino-acid sequence, 82 residues long: MIKLRLKRYGKKREVSYRIVAINSSSRRDGRPLEELGFYNPRTDETRLNVPGIVKRLKEGAQPTETVRSILQKAQVFEQVNA.

The protein belongs to the bacterial ribosomal protein bS16 family.

This chain is Small ribosomal subunit protein bS16, found in Rippkaea orientalis (strain PCC 8801 / RF-1) (Cyanothece sp. (strain PCC 8801)).